Here is a 348-residue protein sequence, read N- to C-terminus: S-adenosylmethionine:tRNA ribosyltransferase-isomerase (348 aa).

It belongs to the QueA family. In terms of assembly, monomer.

Its subcellular location is the cytoplasm. The enzyme catalyses 7-aminomethyl-7-carbaguanosine(34) in tRNA + S-adenosyl-L-methionine = epoxyqueuosine(34) in tRNA + adenine + L-methionine + 2 H(+). It participates in tRNA modification; tRNA-queuosine biosynthesis. Transfers and isomerizes the ribose moiety from AdoMet to the 7-aminomethyl group of 7-deazaguanine (preQ1-tRNA) to give epoxyqueuosine (oQ-tRNA). This is S-adenosylmethionine:tRNA ribosyltransferase-isomerase from Alteromonas mediterranea (strain DSM 17117 / CIP 110805 / LMG 28347 / Deep ecotype).